The primary structure comprises 202 residues: Orotate phosphoribosyltransferase (202 aa).

5-phospho-alpha-D-ribose 1-diphosphate is bound by residues Lys93 and Glu113–Ser121. Orotate is bound by residues Thr117 and Arg145.

It belongs to the purine/pyrimidine phosphoribosyltransferase family. PyrE subfamily. As to quaternary structure, homodimer. The cofactor is Mg(2+).

It catalyses the reaction orotidine 5'-phosphate + diphosphate = orotate + 5-phospho-alpha-D-ribose 1-diphosphate. It functions in the pathway pyrimidine metabolism; UMP biosynthesis via de novo pathway; UMP from orotate: step 1/2. Its function is as follows. Catalyzes the transfer of a ribosyl phosphate group from 5-phosphoribose 1-diphosphate to orotate, leading to the formation of orotidine monophosphate (OMP). In Campylobacter jejuni subsp. jejuni serotype O:2 (strain ATCC 700819 / NCTC 11168), this protein is Orotate phosphoribosyltransferase.